A 189-amino-acid chain; its full sequence is Dihydrofolate reductase (189 aa).

The 182-residue stretch at 3–184 folds into the DHFR domain; it reads SLNSIVAVCQ…IQYKFEVYQK (182 aa). NADP(+) is bound by residues Ala9 and 15–21; that span reads GIGKDGN. 30 to 35 provides a ligand contact to substrate; it reads EYKYFQ. 54–56 serves as a coordination point for NADP(+); the sequence is KKT. Asn64 and Arg70 together coordinate substrate. NADP(+)-binding positions include 76 to 78 and 116 to 123; these read SRE and GGTAVYKA.

It belongs to the dihydrofolate reductase family.

The catalysed reaction is (6S)-5,6,7,8-tetrahydrofolate + NADP(+) = 7,8-dihydrofolate + NADPH + H(+). The protein operates within cofactor biosynthesis; tetrahydrofolate biosynthesis; 5,6,7,8-tetrahydrofolate from 7,8-dihydrofolate: step 1/1. Key enzyme in folate metabolism. Contributes to the de novo mitochondrial thymidylate biosynthesis pathway. Catalyzes an essential reaction for de novo glycine and purine synthesis, and for DNA precursor synthesis. May bind to mRNA. The protein is Dihydrofolate reductase (DHFR) of Gallus gallus (Chicken).